The following is a 265-amino-acid chain: tRNA (guanine-N(7)-)-methyltransferase (265 aa).

S-adenosyl-L-methionine-binding residues include Glu-96, Glu-121, Asp-148, and Asp-170. Asp-170 is a catalytic residue. Residues Lys-174 and Asp-206 each contribute to the substrate site.

This sequence belongs to the class I-like SAM-binding methyltransferase superfamily. TrmB family.

The enzyme catalyses guanosine(46) in tRNA + S-adenosyl-L-methionine = N(7)-methylguanosine(46) in tRNA + S-adenosyl-L-homocysteine. It functions in the pathway tRNA modification; N(7)-methylguanine-tRNA biosynthesis. Functionally, catalyzes the formation of N(7)-methylguanine at position 46 (m7G46) in tRNA. The chain is tRNA (guanine-N(7)-)-methyltransferase from Rhodopseudomonas palustris (strain ATCC BAA-98 / CGA009).